We begin with the raw amino-acid sequence, 246 residues long: 1-(5-phosphoribosyl)-5-[(5-phosphoribosylamino)methylideneamino] imidazole-4-carboxamide isomerase (246 aa).

The active-site Proton acceptor is the Asp7. Asp130 serves as the catalytic Proton donor.

It belongs to the HisA/HisF family.

It localises to the cytoplasm. It catalyses the reaction 1-(5-phospho-beta-D-ribosyl)-5-[(5-phospho-beta-D-ribosylamino)methylideneamino]imidazole-4-carboxamide = 5-[(5-phospho-1-deoxy-D-ribulos-1-ylimino)methylamino]-1-(5-phospho-beta-D-ribosyl)imidazole-4-carboxamide. The protein operates within amino-acid biosynthesis; L-histidine biosynthesis; L-histidine from 5-phospho-alpha-D-ribose 1-diphosphate: step 4/9. This Sodalis glossinidius (strain morsitans) protein is 1-(5-phosphoribosyl)-5-[(5-phosphoribosylamino)methylideneamino] imidazole-4-carboxamide isomerase.